The sequence spans 61 residues: Small ribosomal subunit protein uS14 (61 aa).

4 residues coordinate Zn(2+): C24, C27, C40, and C43.

This sequence belongs to the universal ribosomal protein uS14 family. Zinc-binding uS14 subfamily. Part of the 30S ribosomal subunit. Contacts proteins S3 and S10. Requires Zn(2+) as cofactor.

Its function is as follows. Binds 16S rRNA, required for the assembly of 30S particles and may also be responsible for determining the conformation of the 16S rRNA at the A site. The polypeptide is Small ribosomal subunit protein uS14 (Streptococcus pyogenes serotype M49 (strain NZ131)).